The sequence spans 310 residues: uncharacterized protein (310 aa).

Positions 269-307 (DLAELERKKSLAEIHKKAAMAKKREEKKKIKQELKKSAK) form a coiled coil. Residues 290–304 (KKREEKKKIKQELKK) are compositionally biased toward basic and acidic residues. The tract at residues 290–310 (KKREEKKKIKQELKKSAKGKK) is disordered.

This is an uncharacterized protein from Magallana gigas (Pacific oyster).